A 496-amino-acid chain; its full sequence is Glycerol kinase 2 (496 aa).

T11 is an ADP binding site. Positions 11, 12, and 13 each coordinate ATP. T11 contacts sn-glycerol 3-phosphate. Residue R15 participates in ADP binding. Sn-glycerol 3-phosphate-binding residues include R81, E82, Y133, and D242. R81, E82, Y133, D242, and Q243 together coordinate glycerol. ADP contacts are provided by T264 and G307. ATP contacts are provided by T264, G307, Q311, and G408. Positions 408 and 412 each coordinate ADP.

This sequence belongs to the FGGY kinase family.

The catalysed reaction is glycerol + ATP = sn-glycerol 3-phosphate + ADP + H(+). It participates in polyol metabolism; glycerol degradation via glycerol kinase pathway; sn-glycerol 3-phosphate from glycerol: step 1/1. Its activity is regulated as follows. Inhibited by fructose 1,6-bisphosphate (FBP). In terms of biological role, key enzyme in the regulation of glycerol uptake and metabolism. Catalyzes the phosphorylation of glycerol to yield sn-glycerol 3-phosphate. This Thermotoga maritima (strain ATCC 43589 / DSM 3109 / JCM 10099 / NBRC 100826 / MSB8) protein is Glycerol kinase 2.